The primary structure comprises 614 residues: Zinc metalloproteinase-disintegrin-like HR1b (614 aa).

Residues 1–20 form the signal peptide; sequence MIQVLLVTICLAVFPYQGSS. A propeptide spanning residues 21 to 191 is cleaved from the precursor; the sequence is IILESGNVND…KASKLVVTAE (171 aa). Residue Q192 is modified to Pyrrolidone carboxylic acid. Residues 198-394 enclose the Peptidase M12B domain; it reads RYIKLAIVVD…HKPQCILNAP (197 aa). N-linked (GlcNAc...) asparagine glycosylation is present at N264. Intrachain disulfides connect C309/C389, C349/C373, and C351/C356. H334 is a binding site for Zn(2+). The active site involves E335. Zn(2+)-binding residues include H338 and H344. N372 carries N-linked (GlcNAc...) asparagine glycosylation. Positions 395-398 are excised as a propeptide; the sequence is SKTD. One can recognise a Disintegrin domain in the interval 402–488; that stretch reads PPVCGNELLE…DCPTDRFHRN (87 aa). Ca(2+)-binding residues include V404, N407, L409, E411, E414, and D417. 22 disulfides stabilise this stretch: C405–C424, C405–C434, C416–C429, C416–C434, C418–C424, C428–C451, C442–C448, C447–C473, C460–C480, C467–C492, C467–C499, C492–C504, C499–C504, C511–C526, C511–C561, C526–C568, C539–C549, C549–C556, C556–C593, C561–C568, C587–C598, and C593–C598. Positions 466–468 match the D/ECD-tripeptide motif; that stretch reads ECD. N518 carries an N-linked (GlcNAc...) asparagine glycan. A glycan (N-linked (GlcNAc...) asparagine) is linked at N571. A propeptide spanning residues 608 to 614 is cleaved from the precursor; that stretch reads TTVFSLI.

Belongs to the venom metalloproteinase (M12B) family. P-III subfamily. P-IIIb sub-subfamily. As to quaternary structure, monomer. Zn(2+) is required as a cofactor. As to expression, expressed by the venom gland.

It localises to the secreted. Zinc protease that induces hemorrhage. Has preference for Tyr, Leu, Arg, Met, and Phe at the P1 position, in descending order (in vitro). Shows equal preference for the sequences of Ala-Asp and Arg-Ile at the P3-P2 position with different enzyme cleavage sites across the P1 position: the N-terminus side for Ala-Asp and the C-terminus side for Arg-Ile. Functionally, inhibits platelet aggregation induced by ADP, thrombin, platelet-activating factor and collagen. Acts by inhibiting fibrinogen interaction with platelet receptors alpha-IIb/beta-3 (ITGA2B/ITGB3). The protein is Zinc metalloproteinase-disintegrin-like HR1b of Protobothrops flavoviridis (Habu).